Consider the following 343-residue polypeptide: Cathepsin Q (343 aa).

An N-terminal signal peptide occupies residues 1 to 20 (MTPAVFLVILCLGVVPGASA). A propeptide spans 21 to 124 (LDLSLDVQWQ…FPNSWNWRDA (104 aa)) (activation peptide). Intrachain disulfides connect cysteine 146–cysteine 189 and cysteine 180–cysteine 222. Cysteine 149 is a catalytic residue. An N-linked (GlcNAc...) asparagine glycan is attached at asparagine 228. Cysteine 280 and cysteine 332 are joined by a disulfide. Histidine 286 is a catalytic residue. Asparagine 298 carries an N-linked (GlcNAc...) asparagine glycan. Asparagine 310 is a catalytic residue.

The protein belongs to the peptidase C1 family. As to expression, highly expressed in placenta.

The protein resides in the lysosome. The protein is Cathepsin Q (Ctsq) of Rattus norvegicus (Rat).